The following is a 111-amino-acid chain: Gastrula zinc finger protein XlCGF32.1 (111 aa).

C2H2-type zinc fingers lie at residues 6–28 (FDCT…FLCH), 34–56 (FVCV…LRIH), 62–84 (SVCP…MRIH), and 89–111 (FMCS…LQIH).

Belongs to the krueppel C2H2-type zinc-finger protein family.

Its subcellular location is the nucleus. In terms of biological role, may be involved in transcriptional regulation. The polypeptide is Gastrula zinc finger protein XlCGF32.1 (Xenopus laevis (African clawed frog)).